A 192-amino-acid chain; its full sequence is uncharacterized protein (192 aa).

Positions 29-160 (RRQAAVLIPV…PLDIYRRGDS (132 aa)) constitute a Nudix hydrolase domain. The Nudix box signature appears at 67–89 (GAVDSSDASLIAAALREAQEEVA). Residues E83 and E87 each coordinate Mg(2+).

The protein belongs to the Nudix hydrolase family. PCD1 subfamily. Mn(2+) is required as a cofactor. Mg(2+) serves as cofactor.

Functionally, probably mediates the hydrolysis of some nucleoside diphosphate derivatives. This is an uncharacterized protein from Citrobacter koseri (strain ATCC BAA-895 / CDC 4225-83 / SGSC4696).